The following is a 952-amino-acid chain: GATA zinc finger domain-containing protein 5 (952 aa).

Disordered regions lie at residues 1–36 (MDYQ…DSPS) and 138–197 (PTPL…SPKQ). The span at 10–24 (QISQEFPTDISTTKS) shows a compositional bias: polar residues. Residues 148–157 (SPPPPPPPPA) show a composition bias toward pro residues. Residues 158 to 196 (ATTTTTITTTTTTSAGNSTTKNNNNNNNNNNNNNGKSPK) are compositionally biased toward low complexity. The GATA-type zinc-finger motif lies at 241-266 (CYQCNTSNTPEWRKGPEGPATLCNAC). Disordered stretches follow at residues 380–418 (MTPS…HEQP), 433–478 (LLSS…GGGG), 634–699 (QNNS…NKNN), and 732–816 (QQQE…LSVN). The span at 393–412 (KTTKTKPKPKSKSKPGKITH) shows a compositional bias: basic residues. Low complexity predominate over residues 445–467 (SSSSSCGTSLNSSLGSSSGTITN). The segment covering 468 to 478 (SGGGSSGGGGG) has biased composition (gly residues). Over residues 634–653 (QNNSFSGPNDQNPYVPSVSL) the composition is skewed to polar residues. Composition is skewed to low complexity over residues 654 to 668 (NSNK…NNNK), 678 to 699 (NNKN…NKNN), and 732 to 745 (QQQE…EQQQ). Positions 746 to 762 (NLSINNSNQTNENEILG) are enriched in polar residues. Over residues 763–814 (TTTTTTTSTATIITSQVPMNLSPNSDDNQSSSNYSTLSDSGSSPTDSFSGLS) the composition is skewed to low complexity.

In Dictyostelium discoideum (Social amoeba), this protein is GATA zinc finger domain-containing protein 5 (gtaE).